Reading from the N-terminus, the 951-residue chain is Bifunctional glutamine synthetase adenylyltransferase/adenylyl-removing enzyme (951 aa).

Residues 1-440 form an adenylyl removase region; it reads MLPLPSELQI…VFDDLIGDET (440 aa). The tract at residues 449 to 951 is adenylyl transferase; the sequence is HGLYKSLWQD…WLAANDANVS (503 aa).

It belongs to the GlnE family. Mg(2+) is required as a cofactor.

The enzyme catalyses [glutamine synthetase]-O(4)-(5'-adenylyl)-L-tyrosine + phosphate = [glutamine synthetase]-L-tyrosine + ADP. The catalysed reaction is [glutamine synthetase]-L-tyrosine + ATP = [glutamine synthetase]-O(4)-(5'-adenylyl)-L-tyrosine + diphosphate. Involved in the regulation of glutamine synthetase GlnA, a key enzyme in the process to assimilate ammonia. When cellular nitrogen levels are high, the C-terminal adenylyl transferase (AT) inactivates GlnA by covalent transfer of an adenylyl group from ATP to specific tyrosine residue of GlnA, thus reducing its activity. Conversely, when nitrogen levels are low, the N-terminal adenylyl removase (AR) activates GlnA by removing the adenylyl group by phosphorolysis, increasing its activity. The regulatory region of GlnE binds the signal transduction protein PII (GlnB) which indicates the nitrogen status of the cell. The chain is Bifunctional glutamine synthetase adenylyltransferase/adenylyl-removing enzyme from Yersinia pseudotuberculosis serotype O:1b (strain IP 31758).